The sequence spans 138 residues: Large ribosomal subunit protein bL19 (138 aa).

The protein belongs to the bacterial ribosomal protein bL19 family.

This protein is located at the 30S-50S ribosomal subunit interface and may play a role in the structure and function of the aminoacyl-tRNA binding site. This is Large ribosomal subunit protein bL19 from Rickettsia typhi (strain ATCC VR-144 / Wilmington).